We begin with the raw amino-acid sequence, 288 residues long: Formamidopyrimidine-DNA glycosylase (288 aa).

The active-site Schiff-base intermediate with DNA is Pro-2. Glu-3 acts as the Proton donor in catalysis. Lys-59 serves as the catalytic Proton donor; for beta-elimination activity. The DNA site is built by His-93, Arg-112, and Lys-168. Residues 254 to 288 form an FPG-type zinc finger; that stretch reads NVYGRGGEPCKRCGAPIKRVVVGGRSTHYCATCQR. Arg-278 serves as the catalytic Proton donor; for delta-elimination activity.

The protein belongs to the FPG family. As to quaternary structure, monomer. The cofactor is Zn(2+).

The catalysed reaction is Hydrolysis of DNA containing ring-opened 7-methylguanine residues, releasing 2,6-diamino-4-hydroxy-5-(N-methyl)formamidopyrimidine.. It carries out the reaction 2'-deoxyribonucleotide-(2'-deoxyribose 5'-phosphate)-2'-deoxyribonucleotide-DNA = a 3'-end 2'-deoxyribonucleotide-(2,3-dehydro-2,3-deoxyribose 5'-phosphate)-DNA + a 5'-end 5'-phospho-2'-deoxyribonucleoside-DNA + H(+). Involved in base excision repair of DNA damaged by oxidation or by mutagenic agents. Acts as a DNA glycosylase that recognizes and removes damaged bases. Has a preference for oxidized purines, such as 7,8-dihydro-8-oxoguanine (8-oxoG). Has AP (apurinic/apyrimidinic) lyase activity and introduces nicks in the DNA strand. Cleaves the DNA backbone by beta-delta elimination to generate a single-strand break at the site of the removed base with both 3'- and 5'-phosphates. This chain is Formamidopyrimidine-DNA glycosylase, found in Corynebacterium jeikeium (strain K411).